The sequence spans 202 residues: MWQERLAQLVTTCHWIGAKGWAPATGGNMSVRQDDTWCWLSESGRDKGSLTTEDFLQVEIATNQAPSGRKPSAETGLHTLVYRLFPEANVVLHVHTVNATVLSRIEKSDTLALQGYEMQKTLSGQHSHLDTVPVAIFDNDQDIDALAARIADYAQTRPLRYGFLLRGHGLTCWGKDIQEARRQLEGLEFLFECELMRRRYEP.

The Zn(2+) site is built by His93 and His95.

The protein belongs to the aldolase class II family. MtnB subfamily. Requires Zn(2+) as cofactor.

It catalyses the reaction 5-(methylsulfanyl)-D-ribulose 1-phosphate = 5-methylsulfanyl-2,3-dioxopentyl phosphate + H2O. The protein operates within amino-acid biosynthesis; L-methionine biosynthesis via salvage pathway; L-methionine from S-methyl-5-thio-alpha-D-ribose 1-phosphate: step 2/6. Functionally, catalyzes the dehydration of methylthioribulose-1-phosphate (MTRu-1-P) into 2,3-diketo-5-methylthiopentyl-1-phosphate (DK-MTP-1-P). This Klebsiella pneumoniae (strain 342) protein is Methylthioribulose-1-phosphate dehydratase.